An 89-amino-acid chain; its full sequence is Small ribosomal subunit protein uS15 (89 aa).

It belongs to the universal ribosomal protein uS15 family. In terms of assembly, part of the 30S ribosomal subunit. Forms a bridge to the 50S subunit in the 70S ribosome, contacting the 23S rRNA.

Functionally, one of the primary rRNA binding proteins, it binds directly to 16S rRNA where it helps nucleate assembly of the platform of the 30S subunit by binding and bridging several RNA helices of the 16S rRNA. Forms an intersubunit bridge (bridge B4) with the 23S rRNA of the 50S subunit in the ribosome. The protein is Small ribosomal subunit protein uS15 of Hahella chejuensis (strain KCTC 2396).